Here is a 109-residue protein sequence, read N- to C-terminus: Large ribosomal subunit protein uL24 (109 aa).

Belongs to the universal ribosomal protein uL24 family. Part of the 50S ribosomal subunit.

One of two assembly initiator proteins, it binds directly to the 5'-end of the 23S rRNA, where it nucleates assembly of the 50S subunit. Functionally, one of the proteins that surrounds the polypeptide exit tunnel on the outside of the subunit. In Ehrlichia canis (strain Jake), this protein is Large ribosomal subunit protein uL24.